Consider the following 77-residue polypeptide: Small integral membrane protein 5 (77 aa).

Residues 32-52 (IVAFSVIILFTATVLLLLLIA) traverse the membrane as a helical segment.

It localises to the membrane. This is Small integral membrane protein 5 (SMIM5) from Homo sapiens (Human).